The sequence spans 130 residues: Small ribosomal subunit protein uS9 (130 aa).

Belongs to the universal ribosomal protein uS9 family.

This is Small ribosomal subunit protein uS9 from Shewanella halifaxensis (strain HAW-EB4).